We begin with the raw amino-acid sequence, 209 residues long: Putative 3-methyladenine DNA glycosylase (209 aa).

The disordered stretch occupies residues 189 to 209; it reads HVSTTRLGAPKKKRQKRLERR. Positions 197–209 are enriched in basic residues; sequence APKKKRQKRLERR.

It belongs to the DNA glycosylase MPG family.

The chain is Putative 3-methyladenine DNA glycosylase from Chlorobaculum parvum (strain DSM 263 / NCIMB 8327) (Chlorobium vibrioforme subsp. thiosulfatophilum).